Reading from the N-terminus, the 2130-residue chain is Dedicator of cytokinesis protein 7 (2130 aa).

Serine 30 carries the phosphoserine modification. The tract at residues 137–175 is disordered; the sequence is GFNPNTLDKQKERQKGLPRQVFESDEAPDGSSYQDEQDD. Phosphoserine occurs at positions 180 and 182. A coiled-coil region spans residues 365-395; that stretch reads FKEADATKNKEKLEKLKSQADQFCQRLGKYR. An N6-methyllysine modification is found at lysine 381. Threonine 450 carries the post-translational modification Phosphothreonine. Serine 452 carries the phosphoserine modification. One can recognise a C2 DOCK-type domain in the interval 561–727; the sequence is RNLLYIYPQS…GVFNVEVVAV (167 aa). Serine 862, serine 864, serine 882, serine 888, serine 896, serine 900, and serine 905 each carry phosphoserine. Positions 888 to 901 are enriched in low complexity; sequence SLNLNRSRSLSNSN. Positions 888–966 are disordered; it reads SLNLNRSRSL…SCNRMSSHTE (79 aa). Residues threonine 907 and threonine 909 each carry the phosphothreonine modification. A phosphoserine mark is found at serine 910, serine 929, serine 963, serine 1382, serine 1420, serine 1422, serine 1424, and serine 1428. Over residues 942–966 the composition is skewed to polar residues; sequence SNPSPSAESTQAMDRSCNRMSSHTE. One can recognise a DOCKER domain in the interval 1668–2104; it reads KGYQTSPDLR…LQPLINRKIP (437 aa). Lysine 1952 bears the N6-acetyllysine mark. Positions 2076–2102 form a coiled coil; that stretch reads DQKEYQRELERNYHRLKEALQPLINRK. Serine 2119 carries the post-translational modification Phosphoserine.

It belongs to the DOCK family. Component of the DOCK7-induced septin displacement/DISP complex, at least composed of DOCK7, LRCH3 and MYO6. Interacts with TSC1. Interacts with nucleotide-free RAC1 and RAC3. Interacts with TACC3. Interacts with CRY1. Interacts with NOD2.

The protein localises to the cell projection. The protein resides in the axon. Functions as a guanine nucleotide exchange factor (GEF), which activates Rac1 and Rac3 Rho small GTPases by exchanging bound GDP for free GTP. Does not have a GEF activity for CDC42. Required for STMN1 'Ser-15' phosphorylation during axon formation and consequently for neuronal polarization. As part of the DISP complex, may regulate the association of septins with actin and thereby regulate the actin cytoskeleton. Has a role in pigmentation. Involved in the regulation of cortical neurogenesis through the control of radial glial cells (RGCs) proliferation versus differentiation; negatively regulates the basal-to-apical interkinetic nuclear migration of RGCs by antagonizing the microtubule growth-promoting function of TACC3. The chain is Dedicator of cytokinesis protein 7 (Dock7) from Mus musculus (Mouse).